A 36-amino-acid polypeptide reads, in one-letter code: Protein YnfP (36 aa).

The polypeptide is Protein YnfP (Escherichia coli (strain K12)).